The sequence spans 343 residues: 3-hydroxy-3-methylglutaryl-CoA lyase, cytoplasmic (343 aa).

Gly-2 carries the N-myristoyl glycine lipid modification. One can recognise a Pyruvate carboxyltransferase domain in the interval 48-315 (VKIVEVGPRD…NTGVDLYKVM (268 aa)). Arg-56 contacts substrate. Positions 57, 248, and 250 each coordinate a divalent metal cation. Cys-281 is an active-site residue. Asn-290 lines the a divalent metal cation pocket.

The protein belongs to the HMG-CoA lyase family. Requires a divalent metal cation as cofactor.

The protein localises to the cytoplasm. It localises to the cytosol. Its subcellular location is the endoplasmic reticulum membrane. It carries out the reaction (3S)-3-hydroxy-3-methylglutaryl-CoA = acetoacetate + acetyl-CoA. It functions in the pathway metabolic intermediate metabolism; (S)-3-hydroxy-3-methylglutaryl-CoA degradation; acetoacetate from (S)-3-hydroxy-3-methylglutaryl-CoA: step 1/1. Non-mitochondrial 3-hydroxy-3-methylglutaryl-CoA lyase that catalyzes a cation-dependent cleavage of (S)-3-hydroxy-3-methylglutaryl-CoA into acetyl-CoA and acetoacetate, a key step in ketogenesis, the products of which support energy production in nonhepatic animal tissues. The chain is 3-hydroxy-3-methylglutaryl-CoA lyase, cytoplasmic (Hmgcll1) from Mus musculus (Mouse).